The following is a 433-amino-acid chain: Peptidoglycan DD-endopeptidase ShyC (433 aa).

A helical membrane pass occupies residues Trp-10 to Leu-30. Residues His-299, Asp-303, and His-380 each coordinate Zn(2+).

Belongs to the peptidase M23B family. It depends on Zn(2+) as a cofactor.

The protein localises to the cell inner membrane. Its pathway is cell wall degradation; peptidoglycan degradation. With respect to regulation, reduced activity in 0.5 mM EDTA and a complete loss of activity at higher EDTA concentrations. Functionally, cell wall peptidoglycan (PG) DD-endopeptidase. Hydrolyzes peptide cross-links which covalently connect adjacent PG strands probably to allow insertion of new glycans and thus cell wall expansion. Degrades purified whole PG sacculi in vitro. This is Peptidoglycan DD-endopeptidase ShyC from Vibrio cholerae serotype O1 (strain ATCC 39315 / El Tor Inaba N16961).